The chain runs to 41 residues: Large ribosomal subunit protein bL36 (41 aa).

Belongs to the bacterial ribosomal protein bL36 family.

The protein is Large ribosomal subunit protein bL36 of Sinorhizobium fredii (strain NBRC 101917 / NGR234).